A 1915-amino-acid chain; its full sequence is Cysteine repeat modular protein 2 (1915 aa).

The signal sequence occupies residues 1-23 (MKFKKELINILALIFVLKKNIFA). FU repeat units follow at residues 53–98 (LGLC…QTYV), 104–151 (SCIC…GYTQ), 161–208 (QLLC…LQYK), 210–263 (NGIC…GYVV), and 267–315 (TQRC…GNYQ). A glycan (N-linked (GlcNAc...) asparagine) is linked at N138. N-linked (GlcNAc...) asparagine glycosylation is found at N274, N279, and N316. FU repeat units lie at residues 317–362 (SSLC…GFYT), 373–422 (QPIC…QTYY), 427–492 (TRSC…GFYQ), 496–546 (NNSC…SQNN), and 554–602 (TQAC…GTYM). N409 is a glycosylation site (N-linked (GlcNAc...) asparagine). N-linked (GlcNAc...) asparagine glycans are attached at residues N496, N572, N603, and N621. FU repeat units lie at residues 606 to 639 (TNQC…LQQN), 640 to 686 (YNVC…GFYV), and 690 to 739 (QQAC…NECL). Residue N742 is glycosylated (N-linked (GlcNAc...) asparagine). 2 FU repeats span residues 760-814 (DGQC…GFYY) and 818-865 (NKQC…GYYQ). N909, N930, N1051, N1085, and N1193 each carry an N-linked (GlcNAc...) asparagine glycan. Residues 1184–1224 (VQIPCDSNINCSGNGKCLWSQDNYNEILCICNINYAGRYCE) enclose the EGF-like domain. 3 disulfide bridges follow: C1188–C1200, C1194–C1212, and C1214–C1223. N1250, N1297, N1519, N1546, N1554, N1580, and N1596 each carry an N-linked (GlcNAc...) asparagine glycan. 5 helical membrane passes run 1599–1619 (LLYA…ISII), 1662–1682 (YAQL…VYSL), 1704–1724 (STSV…VNLF), 1763–1783 (GLVF…ILSF), and 1796–1816 (FASF…FCFI). N1867 carries an N-linked (GlcNAc...) asparagine glycan.

It localises to the membrane. Its function is as follows. Required for mucocyst secretion. The polypeptide is Cysteine repeat modular protein 2 (Tetrahymena thermophila (strain SB210)).